A 328-amino-acid polypeptide reads, in one-letter code: MQYKNLGRSGLRVSQLSYGAWVTFGNQLDVKEAKALLQACRDAGVNFFDNAEVYANGRAEEIMGQAMRDLGWRRSDVVVSTKLFWGGQGPNDKGLSRKHIVEGLRGSLKRLDMDYVDVVYCHRPDATTPVEETVRAMNWVIDHGMAFYWGTSEWSAQQITEAWSVANRLDLVGPIVEQPEYNLFSRHKVESEFLPLYSTYGLGLTTWSPLASGVLTGKYAKGNIPADSRFALENYKNLANRSLVDDTLRKVNGLKPIASELGVSLAQLAIAWCASNPNVSSVITGATKENQIVENMKALDVIPLLTPEVVDKIEAVVQSKPKRTESYR.

Residues W21, Q27, and D49 each coordinate NADP(+). Catalysis depends on Y54, which acts as the Proton donor/acceptor. 14 residues coordinate NADP(+): S152, Q178, W207, S208, P209, L210, A211, K218, R229, G285, T287, Q291, E294, and N295.

It belongs to the shaker potassium channel beta subunit family. As to quaternary structure, forms heteromultimeric complexes with potassium channel alpha subunits. In terms of tissue distribution, expressed in late-developed leaves with the highest expression in the flag leaf (at protein level).

Probable accessory potassium channel protein which modulates the activity of the pore-forming alpha subunit. In Oryza sativa subsp. japonica (Rice), this protein is Probable voltage-gated potassium channel subunit beta (KOB1).